The primary structure comprises 364 residues: Zinc finger protein 474 (364 aa).

Over residues 1 to 10 the composition is skewed to basic residues; that stretch reads MERGKKKRIS. Disordered regions lie at residues 1–21 and 37–60; these read MERG…HHSK and SYSS…DTQK. Residues 93–122 form a C2HC/C3H-type 1 zinc finger; sequence GFRVCYICGREFGSQSIAIHEPQCLQKWHI. Zn(2+) contacts are provided by Cys-97, Cys-100, His-112, and Cys-116. Residues 127–147 are disordered; the sequence is LPKHLRRPEPSKPQSLSSSGS. The span at 138–147 shows a compositional bias: low complexity; it reads KPQSLSSSGS. 3 C2HC/C3H-type zinc fingers span residues 164 to 193, 220 to 249, and 283 to 312; these read QLLP…KGEG, RTVI…KWKM, and QLVF…HPYG. Zn(2+) is bound by residues Cys-168, Cys-171, His-183, Cys-187, Cys-224, Cys-227, His-239, Cys-243, Cys-287, Cys-290, His-302, and Cys-306. The disordered stretch occupies residues 187–214; sequence CKPKGEGPRAPHSNSSDHLTGLKKACSG.

Requires Zn(2+) as cofactor.

The sequence is that of Zinc finger protein 474 (ZNF474) from Homo sapiens (Human).